The chain runs to 427 residues: Serine--tRNA ligase (427 aa).

Position 231–233 (231–233 (TAE)) interacts with L-serine. 262 to 264 (RSE) contributes to the ATP binding site. Glu285 is an L-serine binding site. 349 to 352 (EISS) lines the ATP pocket. Ser385 provides a ligand contact to L-serine.

Belongs to the class-II aminoacyl-tRNA synthetase family. Type-1 seryl-tRNA synthetase subfamily. Homodimer. The tRNA molecule binds across the dimer.

Its subcellular location is the cytoplasm. It carries out the reaction tRNA(Ser) + L-serine + ATP = L-seryl-tRNA(Ser) + AMP + diphosphate + H(+). The catalysed reaction is tRNA(Sec) + L-serine + ATP = L-seryl-tRNA(Sec) + AMP + diphosphate + H(+). It participates in aminoacyl-tRNA biosynthesis; selenocysteinyl-tRNA(Sec) biosynthesis; L-seryl-tRNA(Sec) from L-serine and tRNA(Sec): step 1/1. In terms of biological role, catalyzes the attachment of serine to tRNA(Ser). Is also able to aminoacylate tRNA(Sec) with serine, to form the misacylated tRNA L-seryl-tRNA(Sec), which will be further converted into selenocysteinyl-tRNA(Sec). The sequence is that of Serine--tRNA ligase from Listeria monocytogenes serotype 4b (strain CLIP80459).